A 433-amino-acid chain; its full sequence is Bifunctional urease accessory protein UreEF (433 aa).

Residues methionine 1–serine 200 form a urease accessory protein UreE region. The segment at serine 200–serine 433 is urease accessory protein UreF.

In the N-terminal section; belongs to the UreE family. This sequence in the C-terminal section; belongs to the UreF family. In terms of assembly, ureD, UreF and UreG form a complex that acts as a GTP-hydrolysis-dependent molecular chaperone, activating the urease apoprotein by helping to assemble the nickel containing metallocenter of UreC. The UreE protein probably delivers the nickel.

Its subcellular location is the cytoplasm. In terms of biological role, involved in urease metallocenter assembly. Binds nickel. Probably functions as a nickel donor during metallocenter assembly. Functionally, required for maturation of urease via the functional incorporation of the urease nickel metallocenter. The protein is Bifunctional urease accessory protein UreEF (ureEF) of Bordetella bronchiseptica (Alcaligenes bronchisepticus).